The chain runs to 200 residues: Imidazoleglycerol-phosphate dehydratase (200 aa).

The protein belongs to the imidazoleglycerol-phosphate dehydratase family.

The protein localises to the cytoplasm. It carries out the reaction D-erythro-1-(imidazol-4-yl)glycerol 3-phosphate = 3-(imidazol-4-yl)-2-oxopropyl phosphate + H2O. The protein operates within amino-acid biosynthesis; L-histidine biosynthesis; L-histidine from 5-phospho-alpha-D-ribose 1-diphosphate: step 6/9. The polypeptide is Imidazoleglycerol-phosphate dehydratase (Prosthecochloris aestuarii (strain DSM 271 / SK 413)).